Reading from the N-terminus, the 109-residue chain is ATP-dependent Clp protease adapter protein ClpS 2 (109 aa).

The interval 1–24 (MAGDGGRSGPSTPSTSVITKTKPR) is disordered.

Belongs to the ClpS family. Binds to the N-terminal domain of the chaperone ClpA.

In terms of biological role, involved in the modulation of the specificity of the ClpAP-mediated ATP-dependent protein degradation. The protein is ATP-dependent Clp protease adapter protein ClpS 2 of Rhodopseudomonas palustris (strain ATCC BAA-98 / CGA009).